The sequence spans 92 residues: Large ribosomal subunit protein eL43z (92 aa).

The C4-type zinc-finger motif lies at 39–60 (CEFCGKFAVKRKAVGIWGCKDC).

The protein belongs to the eukaryotic ribosomal protein eL43 family.

The sequence is that of Large ribosomal subunit protein eL43z from Oryza sativa subsp. japonica (Rice).